A 132-amino-acid chain; its full sequence is MTRTDTHAPLSQDALARLAGVIESRKPANGGDPDKSYVARLLHKGPDAFLKKVGEEATEVVMAAKDLDHGADKAKLVYEVADLWFHSMIALAHYGLAPADVIAELERREGISGIEEKALRKAAARSSEEGGA.

This sequence belongs to the PRA-PH family.

The protein localises to the cytoplasm. The enzyme catalyses 1-(5-phospho-beta-D-ribosyl)-ATP + H2O = 1-(5-phospho-beta-D-ribosyl)-5'-AMP + diphosphate + H(+). It functions in the pathway amino-acid biosynthesis; L-histidine biosynthesis; L-histidine from 5-phospho-alpha-D-ribose 1-diphosphate: step 2/9. In Acidovorax sp. (strain JS42), this protein is Phosphoribosyl-ATP pyrophosphatase.